The primary structure comprises 342 residues: Deoxyguanosinetriphosphate triphosphohydrolase-like protein (342 aa).

The HD domain maps to 75-190 (RLVHTLEVSQ…VRFADKIAYV (116 aa)).

This sequence belongs to the dGTPase family. Type 2 subfamily.

In Clostridium perfringens (strain 13 / Type A), this protein is Deoxyguanosinetriphosphate triphosphohydrolase-like protein.